A 166-amino-acid chain; its full sequence is Interferon gamma (166 aa).

The signal sequence occupies residues 1–23 (MKYTSSFLALLLSVLLGFSGSYG). A Pyrrolidone carboxylic acid modification is found at glutamine 24. Residues asparagine 39 and asparagine 106 are each glycosylated (N-linked (GlcNAc...) asparagine).

Belongs to the type II (or gamma) interferon family. Homodimer. Interacts with IFNGR1 (via extracellular domain); this interaction promotes IFNGR1 dimerization. As to expression, released primarily from activated T lymphocytes.

It localises to the secreted. Functionally, type II interferon produced by immune cells such as T-cells and NK cells that plays crucial roles in antimicrobial, antiviral, and antitumor responses by activating effector immune cells and enhancing antigen presentation. Primarily signals through the JAK-STAT pathway after interaction with its receptor IFNGR1 to affect gene regulation. Upon IFNG binding, IFNGR1 intracellular domain opens out to allow association of downstream signaling components JAK2, JAK1 and STAT1, leading to STAT1 activation, nuclear translocation and transcription of IFNG-regulated genes. Many of the induced genes are transcription factors such as IRF1 that are able to further drive regulation of a next wave of transcription. Plays a role in class I antigen presentation pathway by inducing a replacement of catalytic proteasome subunits with immunoproteasome subunits. In turn, increases the quantity, quality, and repertoire of peptides for class I MHC loading. Increases the efficiency of peptide generation also by inducing the expression of activator PA28 that associates with the proteasome and alters its proteolytic cleavage preference. Up-regulates as well MHC II complexes on the cell surface by promoting expression of several key molecules such as cathepsins B/CTSB, H/CTSH, and L/CTSL. Participates in the regulation of hematopoietic stem cells during development and under homeostatic conditions by affecting their development, quiescence, and differentiation. This is Interferon gamma (IFNG) from Capra hircus (Goat).